The primary structure comprises 282 residues: Phosphatidylglycerol--prolipoprotein diacylglyceryl transferase (282 aa).

Transmembrane regions (helical) follow at residues 18–38 (IQVH…VALA), 56–76 (ILWA…IFQW), and 89–109 (IWDG…VVIL). Arginine 137 is a binding site for a 1,2-diacyl-sn-glycero-3-phospho-(1'-sn-glycerol). Residues 237–257 (VIRVSQALSVVLFFGSIGLMI) form a helical membrane-spanning segment.

It belongs to the Lgt family.

The protein localises to the cell membrane. The catalysed reaction is L-cysteinyl-[prolipoprotein] + a 1,2-diacyl-sn-glycero-3-phospho-(1'-sn-glycerol) = an S-1,2-diacyl-sn-glyceryl-L-cysteinyl-[prolipoprotein] + sn-glycerol 1-phosphate + H(+). Its pathway is protein modification; lipoprotein biosynthesis (diacylglyceryl transfer). Catalyzes the transfer of the diacylglyceryl group from phosphatidylglycerol to the sulfhydryl group of the N-terminal cysteine of a prolipoprotein, the first step in the formation of mature lipoproteins. The protein is Phosphatidylglycerol--prolipoprotein diacylglyceryl transferase of Lactiplantibacillus plantarum (strain ATCC BAA-793 / NCIMB 8826 / WCFS1) (Lactobacillus plantarum).